Reading from the N-terminus, the 505-residue chain is MADFVAAIDQGTTSTRCMIFDHDGAEVGRHQLEHEQILPRAGWVEHNPVEIWERTGSVLATALNKTKLSTSDLVALGITNQRETSLVWNRHTGRPYYNAIVWQDTRTDRIASALDRDGRGDVIRQKAGLPPATYFSGGKLQWLLENVDGLRADAEKGDALFGTTDTWVLWNLTGGHRGGVHVTDVTNASRTMLMNLETLDWDDELLGFFDIPRQMLPEIRPSSSPEPHGVTVDWGPADGEIPVTGILGDQQAAMVGQVCLDAGEAKNTYGTGNFLLLNTGENIVRSKNGLLTTVCYQFGDAKPVYALEGSIAVTGSAVQWLRDQLGIISGAAQSESLARQVEDNGGVYFVPAFSGLFAPYWRSDARGAIVGLSRFNTNAHVARATLEAICYQSRDVVDAMAADSGVHLEVLKVDGGITANDLCMQIQADVLGVDVVRPVVAETTALGAAYAAGLAVGFWDGADDLRANWQEDKRWSPTWSDDQRAAGYAGWRKAVQRTMDWVDVD.

Threonine 12 is a binding site for ADP. 3 residues coordinate ATP: threonine 12, threonine 13, and serine 14. A sn-glycerol 3-phosphate-binding site is contributed by threonine 12. Arginine 16 provides a ligand contact to ADP. Positions 82, 83, 134, and 249 each coordinate sn-glycerol 3-phosphate. Residues arginine 82, glutamate 83, tyrosine 134, aspartate 249, and glutamine 250 each coordinate glycerol. Threonine 271 and glycine 315 together coordinate ADP. ATP is bound by residues threonine 271, glycine 315, glutamine 319, and glycine 416. The ADP site is built by glycine 416 and asparagine 420.

Belongs to the FGGY kinase family.

The enzyme catalyses glycerol + ATP = sn-glycerol 3-phosphate + ADP + H(+). It functions in the pathway polyol metabolism; glycerol degradation via glycerol kinase pathway; sn-glycerol 3-phosphate from glycerol: step 1/1. Its activity is regulated as follows. Inhibited by fructose 1,6-bisphosphate (FBP). In terms of biological role, key enzyme in the regulation of glycerol uptake and metabolism. Catalyzes the phosphorylation of glycerol to yield sn-glycerol 3-phosphate. The sequence is that of Glycerol kinase from Mycolicibacterium vanbaalenii (strain DSM 7251 / JCM 13017 / BCRC 16820 / KCTC 9966 / NRRL B-24157 / PYR-1) (Mycobacterium vanbaalenii).